The following is a 185-amino-acid chain: GTP cyclohydrolase 1 (185 aa).

Cys75, His78, and Cys146 together coordinate Zn(2+).

This sequence belongs to the GTP cyclohydrolase I family. In terms of assembly, toroid-shaped homodecamer, composed of two pentamers of five dimers.

It carries out the reaction GTP + H2O = 7,8-dihydroneopterin 3'-triphosphate + formate + H(+). It participates in cofactor biosynthesis; 7,8-dihydroneopterin triphosphate biosynthesis; 7,8-dihydroneopterin triphosphate from GTP: step 1/1. The sequence is that of GTP cyclohydrolase 1 from Alkalilimnicola ehrlichii (strain ATCC BAA-1101 / DSM 17681 / MLHE-1).